Consider the following 350-residue polypeptide: MATVGAPRHFCRCACFCTDNLYVARYGLHVRFRGEQQLRRDYGPILRSRGCVSAKDFQQLLAELEQEVERRQRLGQESAARKALIASSYHPARPEVYDSLQDAALAPEFLAVTEYSVSPDADLKGLLQRLETVSEEKRIYRVPVFTAPFCQALLEELEHFEQSDMPKGRPNTMNNYGVLLHELGLDEPLMTPLRERFLQPLMALLYPDCGGGRLDSHRAFVVKYAPGQDLELGCHYDNAELTLNVALGKVFTGGALYFGGLFQAPTALTEPLEVEHVVGQGVLHRGGQLHGARPLGTGERWNLVVWLRASAVRNSLCPMCCREPDLVDDEGFGDGFTREEPATVDVCALT.

The region spanning 215–309 (DSHRAFVVKY…RWNLVVWLRA (95 aa)) is the Fe2OG dioxygenase domain. Residues His-235, Asp-237, and His-290 each coordinate Fe cation. Position 300 (Arg-300) interacts with 2-oxoglutarate.

This sequence belongs to the OGFOD2 family. Fe(2+) serves as cofactor. It depends on L-ascorbate as a cofactor.

The protein is 2-oxoglutarate and iron-dependent oxygenase domain-containing protein 2 (OGFOD2) of Homo sapiens (Human).